The chain runs to 908 residues: SKI/DACH domain-containing protein 1 (908 aa).

Residues 337–353 are compositionally biased toward basic residues; the sequence is HHHHHHHHHHHHHHHRA. The interval 337-461 is disordered; sequence HHHHHHHHHH…SSSGSSQVSV (125 aa). Composition is skewed to low complexity over residues 370–389 and 396–410; these read PHLG…SSYS and SDFG…NSVS. A compositionally biased stretch (acidic residues) spans 411-429; that stretch reads SEEEEEEGEEEEEEEEEEG. Positions 449 to 461 are enriched in low complexity; the sequence is ESDSSSGSSQVSV. Lysine 688 participates in a covalent cross-link: Glycyl lysine isopeptide (Lys-Gly) (interchain with G-Cter in SUMO2). Disordered stretches follow at residues 744 to 763 and 792 to 818; these read ETPS…TLGS and LQTP…TNEG. Residues 746–761 are compositionally biased toward polar residues; it reads PSLNPLAQSQGLSCTL.

It belongs to the DACH/dachshund family.

This chain is SKI/DACH domain-containing protein 1 (SKIDA1), found in Homo sapiens (Human).